Reading from the N-terminus, the 292-residue chain is 33 kDa chaperonin (292 aa).

Intrachain disulfides connect cysteine 230/cysteine 232 and cysteine 263/cysteine 266.

This sequence belongs to the HSP33 family. Post-translationally, under oxidizing conditions two disulfide bonds are formed involving the reactive cysteines. Under reducing conditions zinc is bound to the reactive cysteines and the protein is inactive.

The protein resides in the cytoplasm. Redox regulated molecular chaperone. Protects both thermally unfolding and oxidatively damaged proteins from irreversible aggregation. Plays an important role in the bacterial defense system toward oxidative stress. In Cronobacter sakazakii (strain ATCC BAA-894) (Enterobacter sakazakii), this protein is 33 kDa chaperonin.